The sequence spans 635 residues: Ankyrin repeat and SOCS box protein 2 (635 aa).

The tract at residues 8-16 (RGSQCTIGQ) is required for FLNA degradation. The 20-residue stretch at 26–45 (SEDELVQMAIEQSLADKTRG) folds into the UIM domain. 12 ANK repeats span residues 104–133 (APADPLIKAIKDGDEEALKTMIKEGKNLAE), 137–167 (EGWLPLHEAAYYGQVGCLKVLQRAYPGTIDQ), 171–200 (QEETAVYLATCRGHLDCLLSLLQAGAEPDI), 204–233 (SRETPLYKACERKNAEAVKILVQHNADTNH), 237–266 (RGWTALHESVSRNDLEVMQILVSGGAKVES), 270–299 (YGITPLFVAAQSGQLEALRFLAKYGADINT), 303–332 (DNASALYEACKNEHEEVVEFLLSQGADANK), 336–365 (DGLLPLHIASKKGNYRIVQMLLPVTSRTRI), 368–397 (SGVSPLHLAAERNHDEVLEALLSARFDVNT), 410–439 (RRSSALYFAVVNNNVYATELLLQHGADPNR), 440–469 (DVISPLLVAIRHGCLRTMQLLLDHGANIDA), and 476–504 (TAFPATIMFAMKCLSLLKFLMDLGCDGEP). S371 carries the post-translational modification Phosphoserine; by MAPK. The region spanning 586-635 (IKEKAEPPRPLAHLCRLRVRKAIGKYRIKLLDTLPLPGRLIRYLKYENTQ) is the SOCS box domain.

The protein belongs to the ankyrin SOCS box (ASB) family. Component of a probable ECS E3 ubiquitin-protein ligase complex which contains CUL5, either RBX1 or RNF7/RBX2, Elongin BC complex (ELOB and ELOC) and ASB2. Interacts with SKP2. Through its interaction with SKP2, likely to bridge the formation of dimeric E3-ubiquitin-protein ligase complexes composed of an ECS complex and an SCF(SKP2) complex. Interacts with JAK2; the interaction targets JAK2 for Notch-mediated proteasomal degradation. Interacts with TCF3/E2A; the interaction is mediated by SKP2 and targets TCF3 for Notch-mediated proteasomal degradation. In terms of assembly, interacts with DES. In terms of processing, monoubiquitinated. Post-translationally, not monoubiquitinated. Phosphorylation at Ser-371 is required for association with FLNA and subsequent FLNA degradation. Expressed in muscle cells. In terms of tissue distribution, expressed in hematopoietic cells.

Its subcellular location is the cytoplasm. The protein localises to the cytoskeleton. The protein resides in the stress fiber. It is found in the myofibril. It localises to the sarcomere. Its subcellular location is the z line. It functions in the pathway protein modification; protein ubiquitination. Functionally, substrate-recognition component of a SCF-like ECS (Elongin-Cullin-SOCS-box protein) E3 ubiquitin-protein ligase complex which mediates the ubiquitination and subsequent proteasomal degradation of target proteins. Mediates Notch-induced ubiquitination and degradation of substrates including TCF3/E2A and JAK2. Required during embryonic heart development for complete heart looping. Required for cardiomyocyte differentiation. Specifically promotes the ubiquitination of SMAD9 and targets it for proteasomal degradation, leading to avoid excessive accumulation of SMAD9. Plays a role in the regulation of NK-cell migration by modulating protein levels of filamin A/FLNA via regulation of its ubiquitination and proteasome degradation. Involved in myogenic differentiation and targets filamin FLNB for proteasomal degradation but not filamin FLNA. Also targets DES for proteasomal degradation. Acts as a negative regulator of skeletal muscle mass. In terms of biological role, targets filamins FLNA and FLNB for proteasomal degradation. This leads to enhanced adhesion of hematopoietic cells to fibronectin. Required for FLNA degradation in immature cardiomyocytes which is necessary for actin cytoskeleton remodeling, leading to proper organization of myofibrils and function of mature cardiomyocytes. Required for degradation of FLNA and FLNB in immature dendritic cells (DC) which enhances immature DC migration by promoting DC podosome formation and DC-mediated degradation of the extracellular matrix. Does not promote proteasomal degradation of tyrosine-protein kinases JAK1 or JAK2 in hematopoietic cells. The polypeptide is Ankyrin repeat and SOCS box protein 2 (ASB2) (Homo sapiens (Human)).